The chain runs to 338 residues: Phosphate acyltransferase (338 aa).

Belongs to the PlsX family. As to quaternary structure, homodimer. Probably interacts with PlsY.

The protein localises to the cytoplasm. It catalyses the reaction a fatty acyl-[ACP] + phosphate = an acyl phosphate + holo-[ACP]. Its pathway is lipid metabolism; phospholipid metabolism. Its function is as follows. Catalyzes the reversible formation of acyl-phosphate (acyl-PO(4)) from acyl-[acyl-carrier-protein] (acyl-ACP). This enzyme utilizes acyl-ACP as fatty acyl donor, but not acyl-CoA. In Alcanivorax borkumensis (strain ATCC 700651 / DSM 11573 / NCIMB 13689 / SK2), this protein is Phosphate acyltransferase.